A 1026-amino-acid chain; its full sequence is Contactin-4 (1026 aa).

The signal sequence occupies residues 1–18 (MRLPWELLVLQSFMLCLA). Ig-like C2-type domains lie at 32 to 117 (PSHV…AKLQ), 122 to 206 (ENFK…HQVL), 225 to 311 (PKIE…GQVT), 316 to 400 (PNWV…AELS), 406 to 493 (PDFS…GNVV), and 497 to 586 (PTKV…DKLS). Cystine bridges form between Cys-50–Cys-100, Cys-144–Cys-194, Cys-247–Cys-295, Cys-337–Cys-384, Cys-429–Cys-477, and Cys-519–Cys-576. 3 N-linked (GlcNAc...) asparagine glycosylation sites follow: Asn-65, Asn-90, and Asn-191. Asn-370, Asn-375, and Asn-466 each carry an N-linked (GlcNAc...) asparagine glycan. 4 Fibronectin type-III domains span residues 599–697 (PPEA…TEEA), 702–799 (TPAN…SAEE), 804–899 (PPAS…TRKP), and 900–995 (PPSQ…ISNS). Residues 685-710 (PSRPSEKRRTEEALPEVTPANVSGGG) form a disordered region. Residues 687–696 (RPSEKRRTEE) are compositionally biased toward basic and acidic residues. Residues Asn-705, Asn-764, Asn-858, Asn-893, Asn-911, Asn-929, and Asn-954 are each glycosylated (N-linked (GlcNAc...) asparagine). Ser-1000 carries the GPI-anchor amidated serine lipid modification. A propeptide spans 1001-1026 (GASTSNACTLSAISTIMISLTARSSL) (removed in mature form).

The protein belongs to the immunoglobulin superfamily. Contactin family. Interacts with PTPRG. In terms of tissue distribution, specifically expressed in the nervous system. Not expressed in heart, spleen, lung, liver, kidney or skeletal muscle. In the hippocampus, it is highly expressed in CA1 pyramidal cells and weakly expressed in other regions of the hippocampus.

The protein localises to the cell membrane. The protein resides in the secreted. Its function is as follows. Contactins mediate cell surface interactions during nervous system development. Has some neurite outgrowth-promoting activity. May be involved in synaptogenesis. This chain is Contactin-4 (Cntn4), found in Rattus norvegicus (Rat).